A 697-amino-acid chain; its full sequence is Elongation factor G (697 aa).

The tr-type G domain occupies 8 to 283 (ERMRNIGIAA…AVVDYLPSPL (276 aa)). GTP contacts are provided by residues 17-24 (AHIDAGKT), 81-85 (DTPGH), and 135-138 (NKMD).

Belongs to the TRAFAC class translation factor GTPase superfamily. Classic translation factor GTPase family. EF-G/EF-2 subfamily.

It is found in the cytoplasm. Catalyzes the GTP-dependent ribosomal translocation step during translation elongation. During this step, the ribosome changes from the pre-translocational (PRE) to the post-translocational (POST) state as the newly formed A-site-bound peptidyl-tRNA and P-site-bound deacylated tRNA move to the P and E sites, respectively. Catalyzes the coordinated movement of the two tRNA molecules, the mRNA and conformational changes in the ribosome. In Solibacter usitatus (strain Ellin6076), this protein is Elongation factor G.